We begin with the raw amino-acid sequence, 359 residues long: F-box protein At5g49610 (359 aa).

Positions Asn3–Leu52 constitute an F-box domain.

Part of a SCF (SKP1-cullin-F-box) protein ligase complex. Interacts with SKP1A, SKP1B, ASK11, ASK12, ASK13 and ASK14.

It functions in the pathway protein modification; protein ubiquitination. The protein is F-box protein At5g49610 of Arabidopsis thaliana (Mouse-ear cress).